We begin with the raw amino-acid sequence, 93 residues long: Alpha-defensin 26 (93 aa).

A signal peptide spans 1-19; it reads MKTLVLLSALFLLAFQVQA. Positions 20-58 are excised as a propeptide; that stretch reads DPIQNTDEETNTEVQPQEEDQAVSVSFGNPEGSDLQEES. A disordered region spans residues 24 to 55; it reads NTDEETNTEVQPQEEDQAVSVSFGNPEGSDLQ. Positions 25–40 are enriched in acidic residues; it reads TDEETNTEVQPQEEDQ. Cystine bridges form between Cys-64–Cys-92, Cys-66–Cys-81, and Cys-71–Cys-91.

The protein belongs to the alpha-defensin family.

It localises to the secreted. May have microbicidal activities. This Mus musculus (Mouse) protein is Alpha-defensin 26 (Defa26).